The chain runs to 216 residues: Probable GTP-binding protein EngB (216 aa).

The 175-residue stretch at 27 to 201 (EGIEVAFAGR…REKLDTWFSE (175 aa)) folds into the EngB-type G domain. GTP contacts are provided by residues 35 to 42 (GRSNAGKS), 62 to 66 (GRTQL), 80 to 83 (DLPG), 147 to 150 (TKAD), and 180 to 182 (FSS). Residues S42 and T64 each contribute to the Mg(2+) site.

The protein belongs to the TRAFAC class TrmE-Era-EngA-EngB-Septin-like GTPase superfamily. EngB GTPase family. Mg(2+) is required as a cofactor.

In terms of biological role, necessary for normal cell division and for the maintenance of normal septation. The polypeptide is Probable GTP-binding protein EngB (Yersinia pseudotuberculosis serotype O:1b (strain IP 31758)).